We begin with the raw amino-acid sequence, 947 residues long: Regulator of spindle assembly protein 2 (947 aa).

Disordered stretches follow at residues glutamate 20–glutamine 148 and serine 173–arginine 211. Basic and acidic residues-rich tracts occupy residues proline 30–lysine 50 and threonine 62–isoleucine 84. Polar residues-rich tracts occupy residues serine 90 to tyrosine 102 and glutamine 179 to glutamine 188. The stretch at isoleucine 276 to glutamine 320 forms a coiled coil. Disordered stretches follow at residues lysine 407–glycine 453, glutamate 575–proline 594, serine 600–isoleucine 662, and glutamate 681–aspartate 705. Residues serine 411 to alanine 422 show a composition bias toward low complexity. Over residues glutamate 430–proline 449 the composition is skewed to polar residues. The stretch at alanine 563 to leucine 591 forms a coiled coil. A compositionally biased stretch (acidic residues) spans glutamate 580–glutamate 590. The segment covering phenylalanine 645–lysine 657 has biased composition (basic and acidic residues).

As to quaternary structure, interacts with phosphatase regulatory subunit rsa-1 and tpxl-1. May interact with spd-5. May interact with sys-1.

It localises to the cytoplasm. It is found in the cytoskeleton. Its subcellular location is the microtubule organizing center. The protein resides in the centrosome. Functionally, recruits rsa-1 and, thereby, phosphatase let-92/paa-1 complex to the centrosomes. Recruits sys-1/beta-catenin to mitotic centrosomes during the first embryonic cell divisions. The protein is Regulator of spindle assembly protein 2 of Caenorhabditis elegans.